The primary structure comprises 286 residues: Polyamine aminopropyltransferase (286 aa).

The 234-residue stretch at 6 to 239 (PVWIDEVFED…GWWSWLYASD (234 aa)) folds into the PABS domain. Glutamine 34 contacts S-methyl-5'-thioadenosine. Positions 65 and 89 each coordinate spermidine. Residues glutamate 109 and 140–141 (DG) each bind S-methyl-5'-thioadenosine. Catalysis depends on aspartate 159, which acts as the Proton acceptor. Position 159–162 (159–162 (DGSD)) interacts with spermidine. Residue proline 166 coordinates S-methyl-5'-thioadenosine.

Belongs to the spermidine/spermine synthase family. Homodimer or homotetramer. Homodimer.

It is found in the cytoplasm. The catalysed reaction is S-adenosyl 3-(methylsulfanyl)propylamine + putrescine = S-methyl-5'-thioadenosine + spermidine + H(+). Its pathway is amine and polyamine biosynthesis; spermidine biosynthesis; spermidine from putrescine: step 1/1. Catalyzes the irreversible transfer of a propylamine group from the amino donor S-adenosylmethioninamine (decarboxy-AdoMet) to putrescine (1,4-diaminobutane) to yield spermidine. The sequence is that of Polyamine aminopropyltransferase from Synechococcus elongatus (strain ATCC 33912 / PCC 7942 / FACHB-805) (Anacystis nidulans R2).